A 113-amino-acid polypeptide reads, in one-letter code: Small ribosomal subunit protein uS17 (113 aa).

The protein belongs to the universal ribosomal protein uS17 family. In terms of assembly, part of the 30S ribosomal subunit.

Functionally, one of the primary rRNA binding proteins, it binds specifically to the 5'-end of 16S ribosomal RNA. This Pyrococcus abyssi (strain GE5 / Orsay) protein is Small ribosomal subunit protein uS17.